We begin with the raw amino-acid sequence, 133 residues long: Small ribosomal subunit protein uS9 (133 aa).

The disordered stretch occupies residues 114-133 (VERKKYGKKKARRSPQFSKR). Residues 118–133 (KYGKKKARRSPQFSKR) show a composition bias toward basic residues.

This sequence belongs to the universal ribosomal protein uS9 family.

The protein is Small ribosomal subunit protein uS9 of Fusobacterium nucleatum subsp. nucleatum (strain ATCC 25586 / DSM 15643 / BCRC 10681 / CIP 101130 / JCM 8532 / KCTC 2640 / LMG 13131 / VPI 4355).